Here is a 405-residue protein sequence, read N- to C-terminus: Pentatricopeptide repeat-containing protein At1g11630, mitochondrial (405 aa).

Residues 1–72 constitute a mitochondrion transit peptide; sequence MAFLFRIRTS…RSTSLSPDYH (72 aa). PPR repeat units follow at residues 74–108, 110–144, 145–180, 181–215, 216–250, 251–285, 286–320, 321–355, and 356–386; these read DRIIFSVAVVTLAREKHFVAVSQLLDGFIQNQPDP, SESFAVRAIILYGRANMLDRSIQTFRNLEQYEIPR, TVKSLNALLFACLMAKDYKEANRVYLEMPKMYGIEP, DLETYNRMIRVLCESGSTSSSYSIVAEMERKWIKP, TAASFGLMIDGFYKEEKFDEVRKVMRMMDEFGVHV, GVATYNIMIQCLCKRKKSAEAKALIDGVMSCRMRP, NSVTYSLLIHGFCSEENLDEAMNLFEVMVCNGYKP, DSECYFTLIHCLCKGGDFETALILCRESMEKNWVP, and SFSVMKWLVNGLASRSKVDEAKELIAVVKEK.

The protein belongs to the PPR family. P subfamily.

Its subcellular location is the mitochondrion. In Arabidopsis thaliana (Mouse-ear cress), this protein is Pentatricopeptide repeat-containing protein At1g11630, mitochondrial.